The following is a 404-amino-acid chain: Exodeoxyribonuclease 7 large subunit (404 aa).

It belongs to the XseA family. In terms of assembly, heterooligomer composed of large and small subunits.

The protein resides in the cytoplasm. It catalyses the reaction Exonucleolytic cleavage in either 5'- to 3'- or 3'- to 5'-direction to yield nucleoside 5'-phosphates.. Functionally, bidirectionally degrades single-stranded DNA into large acid-insoluble oligonucleotides, which are then degraded further into small acid-soluble oligonucleotides. In Ruminiclostridium cellulolyticum (strain ATCC 35319 / DSM 5812 / JCM 6584 / H10) (Clostridium cellulolyticum), this protein is Exodeoxyribonuclease 7 large subunit.